The primary structure comprises 424 residues: Multifunctional CCA protein (424 aa).

ATP-binding residues include glycine 8 and arginine 11. CTP is bound by residues glycine 8 and arginine 11. Mg(2+) is bound by residues aspartate 21 and aspartate 23. The ATP site is built by arginine 91, arginine 149, and arginine 152. 3 residues coordinate CTP: arginine 91, arginine 149, and arginine 152. Positions 238–339 (TGIHLMMVLD…VRLLERCDAF (102 aa)) constitute an HD domain.

It belongs to the tRNA nucleotidyltransferase/poly(A) polymerase family. Bacterial CCA-adding enzyme type 1 subfamily. In terms of assembly, monomer. Can also form homodimers and oligomers. Requires Mg(2+) as cofactor. The cofactor is Ni(2+).

The enzyme catalyses a tRNA precursor + 2 CTP + ATP = a tRNA with a 3' CCA end + 3 diphosphate. The catalysed reaction is a tRNA with a 3' CCA end + 2 CTP + ATP = a tRNA with a 3' CCACCA end + 3 diphosphate. Its function is as follows. Catalyzes the addition and repair of the essential 3'-terminal CCA sequence in tRNAs without using a nucleic acid template. Adds these three nucleotides in the order of C, C, and A to the tRNA nucleotide-73, using CTP and ATP as substrates and producing inorganic pyrophosphate. tRNA 3'-terminal CCA addition is required both for tRNA processing and repair. Also involved in tRNA surveillance by mediating tandem CCA addition to generate a CCACCA at the 3' terminus of unstable tRNAs. While stable tRNAs receive only 3'-terminal CCA, unstable tRNAs are marked with CCACCA and rapidly degraded. The chain is Multifunctional CCA protein from Polaromonas naphthalenivorans (strain CJ2).